Reading from the N-terminus, the 118-residue chain is Large ribosomal subunit protein mL53 (118 aa).

Positions 99–118 are disordered; the sequence is AAAASAPGADKVAPGTSTRR.

Belongs to the mitochondrion-specific ribosomal protein mL53 family. As to quaternary structure, component of the mitochondrial ribosome large subunit (39S) which comprises a 16S rRNA and about 50 distinct proteins.

Its subcellular location is the mitochondrion. This Mus musculus (Mouse) protein is Large ribosomal subunit protein mL53 (Mrpl53).